Here is a 160-residue protein sequence, read N- to C-terminus: Type IV major fimbrial protein FimA (160 aa).

Residues 1–7 (MKSLQKG) constitute a propeptide, leader sequence. F8 is modified (N-methylphenylalanine). Residues 8–28 (FTLIELMIVVAIIGILAAFAI) traverse the membrane as a helical segment. The cysteines at positions 63 and 106 are disulfide-linked.

It belongs to the N-Me-Phe pilin family. The pili are polar flexible filaments of about 5.4 nanometers diameter and 2.5 micrometers average length; they consist of only a single polypeptide chain arranged in a helical configuration of five subunits per turn in the assembled pilus.

Its subcellular location is the fimbrium. The protein resides in the membrane. Functionally, major component of the type IV fimbriae that plays an essential role in twitching motility, natural transformation, and protease secretion. The polypeptide is Type IV major fimbrial protein FimA (fimA) (Dichelobacter nodosus (Bacteroides nodosus)).